A 378-amino-acid polypeptide reads, in one-letter code: Chaperone protein DnaJ (378 aa).

The region spanning 5-69 is the J domain; that stretch reads DYYEVLGVSK…NKRANYDQFG (65 aa). A CR-type zinc finger spans residues 135–217; sequence GSEKEISIRK…CHGKGTENKN (83 aa). Residues C148, C151, C165, C168, C191, C194, C205, and C208 each contribute to the Zn(2+) site. 4 CXXCXGXG motif repeats span residues 148 to 155, 165 to 172, 191 to 198, and 205 to 212; these read CHTCDGEG, CHYCNGSG, CPVCSGSG, and CPTCHGKG.

This sequence belongs to the DnaJ family. Homodimer. Zn(2+) serves as cofactor.

It is found in the cytoplasm. In terms of biological role, participates actively in the response to hyperosmotic and heat shock by preventing the aggregation of stress-denatured proteins and by disaggregating proteins, also in an autonomous, DnaK-independent fashion. Unfolded proteins bind initially to DnaJ; upon interaction with the DnaJ-bound protein, DnaK hydrolyzes its bound ATP, resulting in the formation of a stable complex. GrpE releases ADP from DnaK; ATP binding to DnaK triggers the release of the substrate protein, thus completing the reaction cycle. Several rounds of ATP-dependent interactions between DnaJ, DnaK and GrpE are required for fully efficient folding. Also involved, together with DnaK and GrpE, in the DNA replication of plasmids through activation of initiation proteins. This Staphylococcus saprophyticus subsp. saprophyticus (strain ATCC 15305 / DSM 20229 / NCIMB 8711 / NCTC 7292 / S-41) protein is Chaperone protein DnaJ.